The following is a 196-amino-acid chain: Small ribosomal subunit protein uS4c (196 aa).

Basic residues predominate over residues 1-14 (MSRYRGPRLKKIRR). Residues 1-43 (MSRYRGPRLKKIRRLGALPGLTRKTPKSGSNPKKKFHSGKKEQ) are disordered. The 81-residue stretch at 89–169 (MRLDNILFRL…LPKHLTIDTL (81 aa)) folds into the S4 RNA-binding domain.

This sequence belongs to the universal ribosomal protein uS4 family. In terms of assembly, part of the 30S ribosomal subunit. Contacts protein S5. The interaction surface between S4 and S5 is involved in control of translational fidelity.

It localises to the plastid. It is found in the chloroplast. Its function is as follows. One of the primary rRNA binding proteins, it binds directly to 16S rRNA where it nucleates assembly of the body of the 30S subunit. Functionally, with S5 and S12 plays an important role in translational accuracy. The polypeptide is Small ribosomal subunit protein uS4c (rps4) (Melica uniflora (Wood melick grass)).